The sequence spans 393 residues: D-alanyl-D-alanine carboxypeptidase DacA (393 aa).

Positions 1-18 (MLKRTTKIAFLSSFVALS) are cleaved as a signal peptide. Residue Ser65 is the Acyl-ester intermediate of the active site. Lys68 serves as the catalytic Proton acceptor. The active site involves Ser128. Residue Lys231 participates in substrate binding.

This sequence belongs to the peptidase S11 family.

Its subcellular location is the cell inner membrane. The enzyme catalyses Preferential cleavage: (Ac)2-L-Lys-D-Ala-|-D-Ala. Also transpeptidation of peptidyl-alanyl moieties that are N-acyl substituents of D-alanine.. It functions in the pathway cell wall biogenesis; peptidoglycan biosynthesis. Removes C-terminal D-alanyl residues from sugar-peptide cell wall precursors. The polypeptide is D-alanyl-D-alanine carboxypeptidase DacA (dacA) (Haemophilus influenzae (strain ATCC 51907 / DSM 11121 / KW20 / Rd)).